A 450-amino-acid chain; its full sequence is Envelope glycoprotein M (450 aa).

The Intravirion segment spans residues 1 to 31 (MARRGAAVAEEPLLPSSGIVGIGPIEGINWR). A helical membrane pass occupies residues 32 to 52 (TWLVQVFCFALTTSVLFITLV). The Virion surface segment spans residues 53–101 (TASLPQTGYPCFYGSLVDYTQKNHSVVDGVWMRQIAGGVAPTLFLETTS). A helical membrane pass occupies residues 102 to 122 (LVAFLYYTTLVLVAISFYLII). Residues 123 to 153 (SAVLVRRYARGKECTAVAGCTRPTTTLIASH) are Intravirion-facing. The helical transmembrane segment at 154 to 174 (VTLVLGTLATWLLQVVILLLS) threads the bilayer. Topologically, residues 175–178 (HKQA) are virion surface. Residues 179 to 199 (VLGAAVYVVHFVSLVFFCMSF) traverse the membrane as a helical segment. Residues 200-236 (SGLGTASAQYSSNLRILKTNLPALHKMAGPGRAVMTN) lie on the Intravirion side of the membrane. The chain crosses the membrane as a helical span at residues 237–257 (LGMGMLGISLPILSLMLGIIL). Over 258-270 (ANSFHITLWQTVT) the chain is Virion surface. The helical transmembrane segment at 271-291 (VAVGVFVALGLMFLIIVELIV) threads the bilayer. Topologically, residues 292-294 (SHY) are intravirion. Residues 295–315 (VHVLVGPALAVLVASSTLAVA) form a helical membrane-spanning segment. Topologically, residues 316–334 (THSYFVHFHAMVSVQAPNL) are virion surface. Residues 335–355 (ATASKAIVGIMAVISIIMLVV) form a helical membrane-spanning segment. At 356–450 (RLVRAIMFHK…PERSHRREYR (95 aa)) the chain is on the intravirion side.

This sequence belongs to the herpesviridae glycoprotein M family. Interacts (via N-terminus) with gN (via N-terminus). The gM-gN heterodimer forms the gCII complex.

The protein localises to the virion membrane. It is found in the host Golgi apparatus. The protein resides in the host trans-Golgi network. It localises to the host endosome membrane. Its subcellular location is the host nucleus inner membrane. Functionally, envelope glycoprotein important for virion assembly and egress. Plays a role in the correct incorporation of gH-gL into virion membrane. Directs the glycoprotein N (gN) to the host trans-Golgi network. The sequence is that of Envelope glycoprotein M from Equus caballus (Horse).